The following is a 114-amino-acid chain: Iron-sulfur cluster assembly protein CyaY (114 aa).

Belongs to the frataxin family.

Functionally, involved in iron-sulfur (Fe-S) cluster assembly. May act as a regulator of Fe-S biogenesis. This Ralstonia pickettii (strain 12J) protein is Iron-sulfur cluster assembly protein CyaY.